Consider the following 98-residue polypeptide: Exopolysaccharide production repressor protein (98 aa).

Helical transmembrane passes span 6-26 (VFLS…YLNG) and 35-55 (TLIC…FLVW). The disordered stretch occupies residues 73–98 (AEAANDEKQPGKVSLRRLNRPHHLNS). Residues 86–98 (SLRRLNRPHHLNS) show a composition bias toward basic residues.

It localises to the cell membrane. The protein operates within glycan metabolism; exopolysaccharide biosynthesis. Functionally, inhibition of exopolysaccharide synthesis (EPS) and nodulation ability (NOD). In Rhizobium meliloti (strain 1021) (Ensifer meliloti), this protein is Exopolysaccharide production repressor protein (exoX).